The sequence spans 262 residues: Ribose-5-phosphate isomerase A (262 aa).

Residues 33–36 (TGST), 89–92 (DGAD), and 102–105 (KGGG) each bind substrate. Catalysis depends on E111, which acts as the Proton acceptor. K129 is a binding site for substrate.

Belongs to the ribose 5-phosphate isomerase family. As to quaternary structure, homodimer.

It carries out the reaction aldehydo-D-ribose 5-phosphate = D-ribulose 5-phosphate. Its pathway is carbohydrate degradation; pentose phosphate pathway; D-ribose 5-phosphate from D-ribulose 5-phosphate (non-oxidative stage): step 1/1. Catalyzes the reversible conversion of ribose-5-phosphate to ribulose 5-phosphate. In Cereibacter sphaeroides (strain ATCC 17023 / DSM 158 / JCM 6121 / CCUG 31486 / LMG 2827 / NBRC 12203 / NCIMB 8253 / ATH 2.4.1.) (Rhodobacter sphaeroides), this protein is Ribose-5-phosphate isomerase A.